We begin with the raw amino-acid sequence, 212 residues long: 2-dehydro-3-deoxy-phosphogluconate aldolase (212 aa).

Glu45 serves as the catalytic Proton acceptor. 3 residues coordinate pyruvate: Arg49, Thr73, and Lys133. The active-site Schiff-base intermediate with substrate is the Lys133.

Belongs to the KHG/KDPG aldolase family. As to quaternary structure, homotrimer.

It localises to the cytoplasm. It carries out the reaction 2-dehydro-3-deoxy-6-phospho-D-gluconate = D-glyceraldehyde 3-phosphate + pyruvate. It functions in the pathway carbohydrate acid metabolism; 2-dehydro-3-deoxy-D-gluconate degradation; D-glyceraldehyde 3-phosphate and pyruvate from 2-dehydro-3-deoxy-D-gluconate: step 2/2. Involved in the degradation of glucose via the Entner-Doudoroff pathway. Catalyzes the reversible, stereospecific retro-aldol cleavage of 2-keto-3-deoxy-6-phosphogluconate (KDPG) to pyruvate and D-glyceraldehyde-3-phosphate. This is 2-dehydro-3-deoxy-phosphogluconate aldolase (eda) from Haemophilus influenzae (strain ATCC 51907 / DSM 11121 / KW20 / Rd).